Consider the following 179-residue polypeptide: Large ribosomal subunit protein uL5 (179 aa).

The protein belongs to the universal ribosomal protein uL5 family. In terms of assembly, part of the 50S ribosomal subunit; part of the 5S rRNA/L5/L18/L25 subcomplex. Contacts the 5S rRNA and the P site tRNA. Forms a bridge to the 30S subunit in the 70S ribosome.

This is one of the proteins that bind and probably mediate the attachment of the 5S RNA into the large ribosomal subunit, where it forms part of the central protuberance. In the 70S ribosome it contacts protein S13 of the 30S subunit (bridge B1b), connecting the 2 subunits; this bridge is implicated in subunit movement. Contacts the P site tRNA; the 5S rRNA and some of its associated proteins might help stabilize positioning of ribosome-bound tRNAs. This chain is Large ribosomal subunit protein uL5, found in Yersinia enterocolitica serotype O:8 / biotype 1B (strain NCTC 13174 / 8081).